The primary structure comprises 729 residues: Fibroblast growth factor receptor homolog 1 (729 aa).

Positions 1 to 36 (MAAAWSWRASHSTITMTSGSLVVLFLLLSIWQPAVQ) are cleaved as a signal peptide. Residues 37 to 309 (VEGRRQMANS…VASGSLHSTS (273 aa)) lie on the Extracellular side of the membrane. The disordered stretch occupies residues 56 to 101 (ARSQNKTPAITNNANQSSTSSADLDDGAADDDDNKADLPVNVSSKP). Residues 66 to 77 (TNNANQSSTSSA) show a composition bias toward low complexity. Asn-70 carries N-linked (GlcNAc...) asparagine glycosylation. A compositionally biased stretch (acidic residues) spans 78-89 (DLDDGAADDDDN). Residues Asn-96, Asn-134, Asn-140, Asn-171, Asn-207, Asn-213, Asn-242, Asn-246, and Asn-282 are each glycosylated (N-linked (GlcNAc...) asparagine). 2 consecutive Ig-like C2-type domains span residues 106 to 192 (PKKM…VIVS) and 203 to 279 (TGPL…NSLG). Cys-125 and Cys-174 are disulfide-bonded. Cys-220 and Cys-272 are joined by a disulfide. The helical transmembrane segment at 310–330 (FVYIFVFGGLIFIFMTTLFVF) threads the bilayer. Topologically, residues 331 to 729 (YAIRKMKHEK…TDNLQKWCNY (399 aa)) are cytoplasmic. In terms of domain architecture, Protein kinase spans 416 to 692 (LVLGATLGEG…EIVEYMDKLL (277 aa)). ATP is bound by residues 422–430 (LGEGAFGRV) and Lys-443. The Proton acceptor role is filled by Asp-556. The residue at position 587 (Tyr-587) is a Phosphotyrosine; by autocatalysis.

It belongs to the protein kinase superfamily. Tyr protein kinase family. Fibroblast growth factor receptor subfamily. As to expression, in early embryos, expression is specific to mesodermal primordium and invaginated mesodermal cells. At later stages, expression is seen in putative muscle precursor cells and in the CNS.

It is found in the membrane. The catalysed reaction is L-tyrosyl-[protein] + ATP = O-phospho-L-tyrosyl-[protein] + ADP + H(+). Its function is as follows. May be required for patterning of muscle precursor cells. May be essential for generation of mesodermal and endodermal layers, invaginations of various types of cells and CNS formation. This chain is Fibroblast growth factor receptor homolog 1 (htl), found in Drosophila melanogaster (Fruit fly).